We begin with the raw amino-acid sequence, 483 residues long: MPDNHGPWGLRWRAKPSFILTTVAMGLFTDLVLYGILLPALPFTMRNRFDIPNAEIQHYTSAFLATYAGASVFFSVPAGWAASKLGSRQLFLGGLMFLVVATAIFAFSTSLVLLVVSRLLQGMSTAVVWTAGLDMVQDTVEPSQVGETIGTIFATISVGELAAPVLGGVLYERGGISAVFAVSAVLLAIDLALRALVIDKKTAVKYESPRLIRFPVERNMSDDHVASAPTVMEAQESVHEGTRLLPQVDDDGDHYKIDRELGSIVRAIPLLYCFREPRLHLAMLLSFVQALFIGTFDATVPTVAESLFHFSSLQVGLVFIALMLPYFALGRLSGQAIDRFGTKAAATSGYAFLVPCLMLLGLPEKNLVPKEANVALFCTILALNGIGLAVVTSPGYVEAIDVTTKYQVANPGHFGENGPYAQLFGFSSLYFFTGLAVGPLLGGFLRANFGNAVMGAVYAAISGVTAIVSFLFVGVRRFGPGLV.

The next 5 helical transmembrane spans lie at 18–38, 62–82, 96–116, 149–169, and 178–198; these read FILT…GILL, AFLA…GWAA, MFLV…LLVV, IGTI…LGGV, and AVFA…ALVI. Asn219 carries N-linked (GlcNAc...) asparagine glycosylation. Helical transmembrane passes span 281–301, 310–330, 344–364, 374–394, 424–444, and 453–473; these read LAML…ATVP, FSSL…FALG, AAAT…GLPE, VALF…VTSP, FGFS…LGGF, and VMGA…FLFV.

This sequence belongs to the major facilitator superfamily. TCR/Tet family.

The protein localises to the membrane. Its function is as follows. MFS-type transporter; part of the gene cluster that mediates the biosynthesis of pyrrolopyrazines, secondary metabolites showing insecticidal activity. Probably involved in the secretion of peramine and other pyrrolopyrazines. This is MFS-type transporter ppzB from Metarhizium rileyi (strain RCEF 4871) (Nomuraea rileyi).